Here is a 291-residue protein sequence, read N- to C-terminus: Light-independent protochlorophyllide reductase iron-sulfur ATP-binding protein (291 aa).

ATP is bound by residues 10-15 (GIGKST) and K39. S14 contacts Mg(2+). C95 and C129 together coordinate [4Fe-4S] cluster. 180-181 (NR) is a binding site for ATP.

The protein belongs to the NifH/BchL/ChlL family. Homodimer. Protochlorophyllide reductase is composed of three subunits; ChlL, ChlN and ChlB. Requires [4Fe-4S] cluster as cofactor.

The protein resides in the plastid. It localises to the chloroplast. The catalysed reaction is chlorophyllide a + oxidized 2[4Fe-4S]-[ferredoxin] + 2 ADP + 2 phosphate = protochlorophyllide a + reduced 2[4Fe-4S]-[ferredoxin] + 2 ATP + 2 H2O. Its pathway is porphyrin-containing compound metabolism; chlorophyll biosynthesis (light-independent). Component of the dark-operative protochlorophyllide reductase (DPOR) that uses Mg-ATP and reduced ferredoxin to reduce ring D of protochlorophyllide (Pchlide) to form chlorophyllide a (Chlide). This reaction is light-independent. The L component serves as a unique electron donor to the NB-component of the complex, and binds Mg-ATP. This chain is Light-independent protochlorophyllide reductase iron-sulfur ATP-binding protein, found in Pinus koraiensis (Korean pine).